We begin with the raw amino-acid sequence, 1073 residues long: uncharacterized protein (1073 aa).

A signal peptide spans 1 to 36 (MAEIIHHSNVFTWAFHVSEYDGAPLLLLGSFSSVAS). N-linked (GlcNAc...) asparagine glycosylation occurs at asparagine 132. 392-399 (ATAGIGKS) provides a ligand contact to ATP. 5 N-linked (GlcNAc...) asparagine glycosylation sites follow: asparagine 544, asparagine 632, asparagine 703, asparagine 732, and asparagine 953.

This is an uncharacterized protein from Schizosaccharomyces pombe (strain 972 / ATCC 24843) (Fission yeast).